Here is a 187-residue protein sequence, read N- to C-terminus: Probable nicotinate-nucleotide adenylyltransferase (187 aa).

Belongs to the NadD family.

It catalyses the reaction nicotinate beta-D-ribonucleotide + ATP + H(+) = deamido-NAD(+) + diphosphate. It participates in cofactor biosynthesis; NAD(+) biosynthesis; deamido-NAD(+) from nicotinate D-ribonucleotide: step 1/1. Functionally, catalyzes the reversible adenylation of nicotinate mononucleotide (NaMN) to nicotinic acid adenine dinucleotide (NaAD). The chain is Probable nicotinate-nucleotide adenylyltransferase from Agrobacterium fabrum (strain C58 / ATCC 33970) (Agrobacterium tumefaciens (strain C58)).